Here is a 269-residue protein sequence, read N- to C-terminus: MAAAGRFGLLLLIVLWTMVTVVLPASGEGGWKQSRLGTEAAVMEEERCTVERRAHLTYSEFMQHYAFLKPVILQGLTDNSKFRALCSRENLLASFGDNVVRLSTANTYSYQKVDLPFQEYVEQLLHPQDPESLGNDTLYFFGDNNFTEWAPLFQHYRPPPFRLLGTTPAYSFGIAGAGSGVPFHWHGPGFSEVIYGRKRWFLYPPEKTPEFHPNKTTLAWLLEIYPSLAPSARPLECTIQAGEALYFPDRWWHATLNLDTSVFISTFLG.

Residues 1–24 form the signal peptide; sequence MAAAGRFGLLLLIVLWTMVTVVLP. N-linked (GlcNAc...) asparagine glycans are attached at residues Asn135, Asn145, and Asn214. The JmjC domain occupies 147-269; that stretch reads TEWAPLFQHY…TSVFISTFLG (123 aa).

Oligomer. Dimer. Interacts with PKM; regulates angiogenesis and metabolism. N-glycosylated.

The protein localises to the endoplasmic reticulum lumen. The protein resides in the cytoplasm. Functions as a positive regulator of TNF-induced NF-kappaB signaling. Regulates angiogenesis and cellular metabolism through interaction with PKM. This chain is JmjC domain-containing protein 8, found in Rattus norvegicus (Rat).